A 214-amino-acid chain; its full sequence is Urease accessory protein UreG (214 aa).

23–30 (GPVGSGKT) lines the GTP pocket.

The protein belongs to the SIMIBI class G3E GTPase family. UreG subfamily. In terms of assembly, homodimer. UreD, UreF and UreG form a complex that acts as a GTP-hydrolysis-dependent molecular chaperone, activating the urease apoprotein by helping to assemble the nickel containing metallocenter of UreC. The UreE protein probably delivers the nickel.

It is found in the cytoplasm. Facilitates the functional incorporation of the urease nickel metallocenter. This process requires GTP hydrolysis, probably effectuated by UreG. The polypeptide is Urease accessory protein UreG (Bordetella pertussis (strain Tohama I / ATCC BAA-589 / NCTC 13251)).